We begin with the raw amino-acid sequence, 314 residues long: tRNA pseudouridine synthase B (314 aa).

Residue His-43 coordinates substrate. Asp-48 (nucleophile) is an active-site residue. Substrate-binding residues include Tyr-76, Tyr-179, and Leu-200.

It belongs to the pseudouridine synthase TruB family. Type 1 subfamily.

It carries out the reaction uridine(55) in tRNA = pseudouridine(55) in tRNA. Its function is as follows. Responsible for synthesis of pseudouridine from uracil-55 in the psi GC loop of transfer RNAs. The polypeptide is tRNA pseudouridine synthase B (Shigella boydii serotype 4 (strain Sb227)).